The sequence spans 154 residues: PTS system glucose-specific EIIA component (154 aa).

Residues 26 to 130 enclose the PTS EIIA type-1 domain; that stretch reads DEVFKERMLG…SIKSPIIFTN (105 aa). Histidine 63 and histidine 78 together coordinate Zn(2+). The active-site Tele-phosphohistidine intermediate; for EIIA activity is the histidine 78. Histidine 78 carries the post-translational modification Phosphohistidine; by HPr.

In terms of assembly, heterodimer with glycerol kinase (glpk). Requires Zn(2+) as cofactor.

It is found in the cytoplasm. The phosphoenolpyruvate-dependent sugar phosphotransferase system (sugar PTS), a major carbohydrate active transport system, catalyzes the phosphorylation of incoming sugar substrates concomitantly with their translocation across the cell membrane. The enzyme II complex composed of PtsG and Crr is involved in glucose transport. The sequence is that of PTS system glucose-specific EIIA component (crr) from Mycoplasma capricolum subsp. capricolum (strain California kid / ATCC 27343 / NCTC 10154).